The primary structure comprises 1402 residues: DNA-directed RNA polymerase subunit beta' (1402 aa).

Zn(2+) contacts are provided by Cys-73, Cys-75, Cys-88, and Cys-91. Mg(2+) is bound by residues Asp-464, Asp-466, and Asp-468. Zn(2+)-binding residues include Cys-812, Cys-886, Cys-893, and Cys-896.

It belongs to the RNA polymerase beta' chain family. As to quaternary structure, the RNAP catalytic core consists of 2 alpha, 1 beta, 1 beta' and 1 omega subunit. When a sigma factor is associated with the core the holoenzyme is formed, which can initiate transcription. Mg(2+) is required as a cofactor. Zn(2+) serves as cofactor.

It carries out the reaction RNA(n) + a ribonucleoside 5'-triphosphate = RNA(n+1) + diphosphate. Its function is as follows. DNA-dependent RNA polymerase catalyzes the transcription of DNA into RNA using the four ribonucleoside triphosphates as substrates. This chain is DNA-directed RNA polymerase subunit beta', found in Rhodopseudomonas palustris (strain ATCC BAA-98 / CGA009).